The primary structure comprises 565 residues: Granule-bound starch synthase 1b, chloroplastic/amyloplastic (565 aa).

The transit peptide at 1-34 directs the protein to the chloroplast; sequence VFLSMRNKTQLAKRRATNYETHRNSSRTSSPIVC. Residue lysine 52 participates in ADP-alpha-D-glucose binding.

This sequence belongs to the glycosyltransferase 1 family. Bacterial/plant glycogen synthase subfamily.

It is found in the plastid. Its subcellular location is the chloroplast. The protein localises to the amyloplast. It catalyses the reaction an NDP-alpha-D-glucose + [(1-&gt;4)-alpha-D-glucosyl](n) = [(1-&gt;4)-alpha-D-glucosyl](n+1) + a ribonucleoside 5'-diphosphate + H(+). Its pathway is glycan biosynthesis; starch biosynthesis. In terms of biological role, involved in the synthesis of amylose in endosperm. This is Granule-bound starch synthase 1b, chloroplastic/amyloplastic from Hordeum vulgare (Barley).